The sequence spans 268 residues: Imidazole glycerol phosphate synthase subunit HisF (268 aa).

Residues Asp-12 and Asp-131 contribute to the active site.

It belongs to the HisA/HisF family. As to quaternary structure, heterodimer of HisH and HisF.

The protein localises to the cytoplasm. The enzyme catalyses 5-[(5-phospho-1-deoxy-D-ribulos-1-ylimino)methylamino]-1-(5-phospho-beta-D-ribosyl)imidazole-4-carboxamide + L-glutamine = D-erythro-1-(imidazol-4-yl)glycerol 3-phosphate + 5-amino-1-(5-phospho-beta-D-ribosyl)imidazole-4-carboxamide + L-glutamate + H(+). Its pathway is amino-acid biosynthesis; L-histidine biosynthesis; L-histidine from 5-phospho-alpha-D-ribose 1-diphosphate: step 5/9. In terms of biological role, IGPS catalyzes the conversion of PRFAR and glutamine to IGP, AICAR and glutamate. The HisF subunit catalyzes the cyclization activity that produces IGP and AICAR from PRFAR using the ammonia provided by the HisH subunit. The protein is Imidazole glycerol phosphate synthase subunit HisF of Chelativorans sp. (strain BNC1).